We begin with the raw amino-acid sequence, 189 residues long: Prophage DNA-packing protein NohA (189 aa).

The protein belongs to the terminase small subunit family.

The polypeptide is Prophage DNA-packing protein NohA (nohA) (Escherichia coli (strain K12)).